The primary structure comprises 639 residues: 3D-(3,5/4)-trihydroxycyclohexane-1,2-dione hydrolase (639 aa).

Glu62 serves as a coordination point for thiamine diphosphate. The segment at Ser438–Gly518 is thiamine pyrophosphate binding. Mg(2+)-binding residues include Asp489 and Asn516.

The protein belongs to the TPP enzyme family. Mg(2+) serves as cofactor. It depends on thiamine diphosphate as a cofactor.

The catalysed reaction is 3D-3,5/4-trihydroxycyclohexane-1,2-dione + H2O = 5-deoxy-D-glucuronate + H(+). The protein operates within polyol metabolism; myo-inositol degradation into acetyl-CoA; acetyl-CoA from myo-inositol: step 3/7. In terms of biological role, involved in the cleavage of the C1-C2 bond of 3D-(3,5/4)-trihydroxycyclohexane-1,2-dione (THcHDO) to yield 5-deoxy-glucuronate (5DG). This chain is 3D-(3,5/4)-trihydroxycyclohexane-1,2-dione hydrolase, found in Clostridium perfringens (strain 13 / Type A).